The following is a 487-amino-acid chain: Aromatic-L-amino-acid decarboxylase (487 aa).

The residue at position 1 (M1) is an N-acetylmethionine. A run of 2 repeats spans residues 58 to 115 (EDIE…TELE) and 118 to 178 (MMDW…MQAA). Residues 58 to 178 (EDIEKIIMPG…AASPELMQAA (121 aa)) form a 2 X approximate tandem repeats region. Residue T82 participates in substrate binding. Pyridoxal 5'-phosphate-binding residues include A148 and S149. H192 is a binding site for substrate. Positions 246 and 300 each coordinate pyridoxal 5'-phosphate. Position 303 is an N6-(pyridoxal phosphate)lysine (K303).

Belongs to the group II decarboxylase family. Homodimer. Requires pyridoxal 5'-phosphate as cofactor.

It catalyses the reaction L-dopa + H(+) = dopamine + CO2. It carries out the reaction 5-hydroxy-L-tryptophan + H(+) = serotonin + CO2. The protein operates within catecholamine biosynthesis; dopamine biosynthesis; dopamine from L-tyrosine: step 2/2. Catalyzes the decarboxylation of L-3,4-dihydroxyphenylalanine (DOPA) to dopamine and L-5-hydroxytryptophan to serotonin. The chain is Aromatic-L-amino-acid decarboxylase (DDC) from Bos taurus (Bovine).